The chain runs to 306 residues: Mitochondrial brown fat uncoupling protein 1 (306 aa).

The Mitochondrial intermembrane segment spans residues 1–10; the sequence is MVGTTTTDVP. Residues 11-32 form a helical membrane-spanning segment; sequence PTMGVKIFSAGVAACLADVITF. 3 Solcar repeats span residues 11–102, 110–200, and 209–294; these read PTMG…VQEF, PSLG…MKGA, and DDVP…LKGE. Topologically, residues 33-73 are mitochondrial matrix; sequence PLDTAKVRQQIQGEFPITSGIRYKGVLGTITTLAKTEGPLK. Lys56 is a fatty acid 16:0 binding site. The chain crosses the membrane as a helical span at residues 74-96; that stretch reads LYSGLPAGLQRQISFASLRIGLY. Topologically, residues 97–115 are mitochondrial intermembrane; that stretch reads DTVQEFFTSGEETPSLGSK. Residues 116-132 traverse the membrane as a helical segment; the sequence is ISAGLTTGGVAVFIGQP. The Mitochondrial matrix segment spans residues 133-177; the sequence is TEVVKVRLQAQSHLHGLKPRYTGTYNAYRIIATTESLTSLWKGTT. A helical membrane pass occupies residues 178–194; sequence PNLLRNVIINCTELVTY. Topologically, residues 195–211 are mitochondrial intermembrane; the sequence is DLMKGALVRNEILADDV. Residues 212–231 form a helical membrane-spanning segment; sequence PCHFVSALIAGFCTTLLSSP. Topologically, residues 232–265 are mitochondrial matrix; sequence VDVVKTRFINSPPGQYASVPNCAMTMFTKEGPTA. Cys253 is subject to Cysteine sulfenic acid (-SOH). Residues 266–288 form a helical membrane-spanning segment; that stretch reads FFKGFVPSFLRLGSWNVIMFVCF. Residue Lys268 participates in fatty acid 16:0 binding. Residues 289–306 are Mitochondrial intermembrane-facing; sequence EKLKGELMRSRQTVDCAT.

The protein belongs to the mitochondrial carrier (TC 2.A.29) family. As to quaternary structure, most probably functions as a monomer. Binds one purine nucleotide per monomer. However, has also been suggested to function as a homodimer or a homotetramer. Tightly associates with cardiolipin in the mitochondrion inner membrane; may stabilize and regulate its activity. In terms of processing, may undergo sulfenylation upon cold exposure. May increase the sensitivity of UCP1 thermogenic function to the activation by noradrenaline probably through structural effects. May undergo ubiquitin-mediated proteasomal degradation. Brown adipose tissue.

It is found in the mitochondrion inner membrane. The catalysed reaction is H(+)(in) = H(+)(out). Has no constitutive proton transporter activity and has to be activated by long-chain fatty acids/LCFAs. Inhibited by purine nucleotides. Both purine nucleotides and LCFAs bind the cytosolic side of the transporter and directly compete to activate or inhibit it. Activated by noradrenaline and reactive oxygen species. Despite lacking canonical translational encoding for selenocysteine, a small pool of the protein has been observed to selectively incorporate selenocysteine at 'Cys-253'. Selenocysteine-modified protein is highly sensitive to redox modification and may constitute a pool of protein highly sensitive to activation by elevated levels of reactive oxygen species (ROS). Functionally, mitochondrial protein responsible for thermogenic respiration, a specialized capacity of brown adipose tissue and beige fat that participates in non-shivering adaptive thermogenesis to temperature and diet variations and more generally to the regulation of energy balance. Functions as a long-chain fatty acid/LCFA and proton symporter, simultaneously transporting one LCFA and one proton through the inner mitochondrial membrane. However, LCFAs remaining associated with the transporter via their hydrophobic tails, it results in an apparent transport of protons activated by LCFAs. Thereby, dissipates the mitochondrial proton gradient and converts the energy of substrate oxydation into heat instead of ATP. Regulates the production of reactive oxygen species/ROS by mitochondria. In Oryctolagus cuniculus (Rabbit), this protein is Mitochondrial brown fat uncoupling protein 1.